Reading from the N-terminus, the 89-residue chain is Small ribosomal subunit protein uS15 (89 aa).

It belongs to the universal ribosomal protein uS15 family. As to quaternary structure, part of the 30S ribosomal subunit. Forms a bridge to the 50S subunit in the 70S ribosome, contacting the 23S rRNA.

Its function is as follows. One of the primary rRNA binding proteins, it binds directly to 16S rRNA where it helps nucleate assembly of the platform of the 30S subunit by binding and bridging several RNA helices of the 16S rRNA. Functionally, forms an intersubunit bridge (bridge B4) with the 23S rRNA of the 50S subunit in the ribosome. This chain is Small ribosomal subunit protein uS15, found in Nitratiruptor sp. (strain SB155-2).